Here is a 206-residue protein sequence, read N- to C-terminus: Holliday junction branch migration complex subunit RuvA (206 aa).

Positions 1–63 (MIASLRGTVI…EDAMKLYGFI (63 aa)) are domain I. The segment at 64–142 (DNESREMFSV…AFAAGVVDEA (79 aa)) is domain II. Residues 143–153 (GEQISLPNANI) form a flexible linker region. A domain III region spans residues 154–206 (ASEVVVEQVSQALVGLGFSEKQSDDAVSFVLAADPSLDTSGALRAALAKLSGK).

The protein belongs to the RuvA family. In terms of assembly, homotetramer. Forms an RuvA(8)-RuvB(12)-Holliday junction (HJ) complex. HJ DNA is sandwiched between 2 RuvA tetramers; dsDNA enters through RuvA and exits via RuvB. An RuvB hexamer assembles on each DNA strand where it exits the tetramer. Each RuvB hexamer is contacted by two RuvA subunits (via domain III) on 2 adjacent RuvB subunits; this complex drives branch migration. In the full resolvosome a probable DNA-RuvA(4)-RuvB(12)-RuvC(2) complex forms which resolves the HJ.

The protein resides in the cytoplasm. Its function is as follows. The RuvA-RuvB-RuvC complex processes Holliday junction (HJ) DNA during genetic recombination and DNA repair, while the RuvA-RuvB complex plays an important role in the rescue of blocked DNA replication forks via replication fork reversal (RFR). RuvA specifically binds to HJ cruciform DNA, conferring on it an open structure. The RuvB hexamer acts as an ATP-dependent pump, pulling dsDNA into and through the RuvAB complex. HJ branch migration allows RuvC to scan DNA until it finds its consensus sequence, where it cleaves and resolves the cruciform DNA. This chain is Holliday junction branch migration complex subunit RuvA, found in Corynebacterium glutamicum (strain R).